The sequence spans 149 residues: D-aminoacyl-tRNA deacylase (149 aa).

The Gly-cisPro motif, important for rejection of L-amino acids signature appears at 137 to 138 (GP).

This sequence belongs to the DTD family. As to quaternary structure, homodimer.

It localises to the cytoplasm. The enzyme catalyses glycyl-tRNA(Ala) + H2O = tRNA(Ala) + glycine + H(+). The catalysed reaction is a D-aminoacyl-tRNA + H2O = a tRNA + a D-alpha-amino acid + H(+). In terms of biological role, an aminoacyl-tRNA editing enzyme that deacylates mischarged D-aminoacyl-tRNAs. Also deacylates mischarged glycyl-tRNA(Ala), protecting cells against glycine mischarging by AlaRS. Acts via tRNA-based rather than protein-based catalysis; rejects L-amino acids rather than detecting D-amino acids in the active site. By recycling D-aminoacyl-tRNA to D-amino acids and free tRNA molecules, this enzyme counteracts the toxicity associated with the formation of D-aminoacyl-tRNA entities in vivo and helps enforce protein L-homochirality. The polypeptide is D-aminoacyl-tRNA deacylase (Clostridioides difficile (strain 630) (Peptoclostridium difficile)).